The sequence spans 292 residues: Peroxisomal 2,4-dienoyl-CoA reductase [(3E)-enoyl-CoA-producing] (292 aa).

The residue at position 2 (A2) is an N-acetylalanine. Residues 35–40, 60–64, and D86 contribute to the NADP(+) site; these read GGGSGI and RSLQK. Residue R60 coordinates substrate. The residue at position 64 (K64) is an N6-acetyllysine. Residues R88, F118, and 126 to 128 each bind substrate; that span reads SFN. An N6-acetyllysine modification is found at K151. NADP(+) contacts are provided by residues K182 and 208–214; that span reads PGAISGT. R219 serves as a coordination point for substrate. S287 carries the post-translational modification Phosphoserine. Residues 290 to 292 carry the Microbody targeting signal motif; it reads AKL. K291 is subject to N6-acetyllysine.

It belongs to the short-chain dehydrogenases/reductases (SDR) family. 2,4-dienoyl-CoA reductase subfamily. In terms of assembly, monomer, dimer and oligomer.

The protein localises to the peroxisome. The catalysed reaction is a (2E,4Z)-dienoyl-CoA + NADPH + H(+) = a 4,5-saturated-(3E)-enoyl-CoA + NADP(+). It catalyses the reaction a (2E,4E)-dienoyl-CoA + NADPH + H(+) = a 4,5-saturated-(3E)-enoyl-CoA + NADP(+). The enzyme catalyses (2E,4E)-hexadienoyl-CoA + NADPH + H(+) = (3E)-hexenoyl-CoA + NADP(+). It carries out the reaction (2E,4E)-decadienoyl-CoA + NADPH + H(+) = (3E)-decenoyl-CoA + NADP(+). The catalysed reaction is (2E,4Z,7Z,10Z,13Z,16Z,19Z)-docosaheptaenoyl-CoA + NADPH + H(+) = (3E,7Z,10Z,13Z,16Z,19Z)-docosahexaenoyl-CoA + NADP(+). Its function is as follows. Auxiliary enzyme of beta-oxidation. Participates in the degradation of unsaturated fatty enoyl-CoA esters having double bonds in both even- and odd-numbered positions in peroxisome. Catalyzes the NADP-dependent reduction of 2,4-dienoyl-CoA to yield trans-3-enoyl-CoA. Has activity towards short and medium chain 2,4-dienoyl-CoAs, but also towards 2,4,7,10,13,16,19-docosaheptaenoyl-CoA, suggesting that it does not constitute a rate limiting step in the peroxisomal degradation of docosahexaenoic acid. The sequence is that of Peroxisomal 2,4-dienoyl-CoA reductase [(3E)-enoyl-CoA-producing] (Decr2) from Mus musculus (Mouse).